The following is a 612-amino-acid chain: MENQLAKSTEERTFQYQDSLPSLPVPSLEESLKKYLESVKPFANEEEYKNTEAIVWKFQNGIGEKLQQKLLQRAKGRRNWLEEWWLNVAYLDVRIPSQLNVNFGGPASHIEHYWPPKEGTQLERGSISLWHNLNYWQLLRKEKLAVEKVGNTPLDMNQFRMLFSTCKIPGITRDSIINYFRTESEGHSPSHLAVLCRGRVFVFDVMHEGYLMTAPEIQRQLTYIQKKCHSEPDGPGVAALTTEERTRWAKAREYLISLNPENLTILEKIQSSLLVFCLDDDSPHVTPEDYSQVSAKILNGDPTVRWGDKSYNLIAFSNGVFGSNCDHAPFDAMVLVKVCYYVDENILENEGRWKGSEKVRDIPVPEELVFTVDEKVLNDINQAKAQYFKQVSDLQLVVYAFTSFGKKLTKEKQLHPDTFIQLALQLAYYRLHGRPGCCYETAMTRLFYHGRTETVRPCTVEAVNWCQSMQNPSTSLLERKHMMLEAFAKHNKMMKDCSTGKGFDRHLLGLSLIAKEEGLPVPELFTDPLFSRSGGGGNFVLSTSLVGYLRVQGVMVPMVHNGYGFFYHIRDDRFVVSCSAWKSCPETDAEKLVQQVFHAFCDMMQLMEMPHL.

Residue Met1 is modified to N-acetylmethionine. N6-succinyllysine is present on residues Lys40 and Lys57. The active-site Proton acceptor is His327. CoA contacts are provided by residues Lys406 and 410–417 (KEKQLHPD). Lys406 bears the N6-acetyllysine; alternate mark. An N6-succinyllysine; alternate modification is found at Lys406. Tyr439, Thr441, and Thr452 together coordinate (R)-carnitine. Positions 610-612 (PHL) match the Microbody targeting signal motif.

Belongs to the carnitine/choline acetyltransferase family. As to quaternary structure, monomer.

It localises to the peroxisome. It carries out the reaction octanoyl-CoA + (R)-carnitine = O-octanoyl-(R)-carnitine + CoA. The catalysed reaction is 4,8-dimethylnonanoyl-CoA + (R)-carnitine = O-4,8-dimethylnonanoyl-(R)-carnitine + CoA. The protein operates within lipid metabolism; fatty acid beta-oxidation. Its function is as follows. Beta-oxidation of fatty acids. The highest activity concerns the C6 to C10 chain length substrate. The sequence is that of Peroxisomal carnitine O-octanoyltransferase (CROT) from Bos taurus (Bovine).